A 757-amino-acid chain; its full sequence is Neutral ceramidase 2 (757 aa).

The N-terminal stretch at 1-25 (MAVSLPLFQFILFLLLLLLSRTVYA) is a signal peptide. Asn-311 carries an N-linked (GlcNAc...) asparagine glycan. Ser-330 serves as the catalytic Nucleophile. N-linked (GlcNAc...) asparagine glycans are attached at residues Asn-348 and Asn-657.

It belongs to the neutral ceramidase family.

Its subcellular location is the secreted. The protein localises to the endoplasmic reticulum. It is found in the golgi apparatus. It catalyses the reaction an N-acylsphing-4-enine + H2O = sphing-4-enine + a fatty acid. Hydrolyzes the sphingolipid ceramide into sphingosine and free fatty acid. This Arabidopsis thaliana (Mouse-ear cress) protein is Neutral ceramidase 2.